The primary structure comprises 617 residues: 5-hydroxytryptamine receptor 2B (617 aa).

The Extracellular portion of the chain corresponds to 1 to 95 (MLKTVTTAMA…LLVKMIAMAV (95 aa)). N31, N41, N51, and N58 each carry an N-linked (GlcNAc...) asparagine glycan. Residues 96–116 (VLGLMILVTIIGNVFVIAAII) form a helical membrane-spanning segment. Topologically, residues 117–128 (LERNLQNVANYL) are cytoplasmic. A helical membrane pass occupies residues 129 to 149 (VASLAVADLFVACLVMPLGAV). Over 150–164 (YEISNGWILGPELCD) the chain is Extracellular. C163 and C242 are oxidised to a cystine. A helical transmembrane segment spans residues 165–185 (IWTSCDVLCCTASILHLVAIA). The Cytoplasmic segment spans residues 186 to 205 (ADRYWTVTNIDYNNLRTPRR). The chain crosses the membrane as a helical span at residues 206–226 (VFLMIFCVWFAALIVSLAPQF). The Extracellular segment spans residues 227–256 (GWKDPDYMKRIEEQHCMVSQDVGYQIFATC). A helical transmembrane segment spans residues 257-277 (CTFYVPLLVILFLYWKIYIIA). Residues 278-534 (RKRIQRRAQK…EAKRERKAAQ (257 aa)) are Cytoplasmic-facing. Residues 309–336 (RSKRRAERKRLEAGERTPVDGDGTGGQL) are disordered. Basic and acidic residues predominate over residues 317–327 (KRLEAGERTPV). The helical transmembrane segment at 535 to 555 (TLAIITGAFVICWLPFFVMAL) threads the bilayer. The Extracellular segment spans residues 556-570 (TMSLCKECEIHTAVA). Residues 571 to 591 (SLFLWLGYFNSTLNPVIYTIF) form a helical membrane-spanning segment. The Cytoplasmic segment spans residues 592–617 (NPEFRRAFKRILFGRKAAARARSAKI).

Belongs to the G-protein coupled receptor 1 family.

It localises to the cell membrane. Functionally, this is one of the several different receptors for 5-hydroxytryptamine (serotonin), a biogenic hormone that functions as a neurotransmitter, a hormone, and a mitogen. The activity of this receptor is mediated by G proteins which inhibit adenylate cyclase. This chain is 5-hydroxytryptamine receptor 2B (5-HT1B), found in Drosophila melanogaster (Fruit fly).